Consider the following 330-residue polypeptide: Tryptophan--tRNA ligase (330 aa).

ATP contacts are provided by residues 10-12 and 18-19; these read QTT and GN. A 'HIGH' region motif is present at residues 11-19; the sequence is TTGALHLGN. Asp-134 contributes to the L-tryptophan binding site. ATP-binding positions include 146 to 148, Ile-186, and 195 to 199; these read GED and KMSKS. A 'KMSKS' region motif is present at residues 195 to 199; the sequence is KMSKS.

Belongs to the class-I aminoacyl-tRNA synthetase family. As to quaternary structure, homodimer.

The protein resides in the cytoplasm. It catalyses the reaction tRNA(Trp) + L-tryptophan + ATP = L-tryptophyl-tRNA(Trp) + AMP + diphosphate + H(+). Its function is as follows. Catalyzes the attachment of tryptophan to tRNA(Trp). The polypeptide is Tryptophan--tRNA ligase (Rickettsia prowazekii (strain Madrid E)).